The primary structure comprises 459 residues: Phosphoglucosamine mutase (459 aa).

Serine 106 serves as the catalytic Phosphoserine intermediate. The Mg(2+) site is built by serine 106, aspartate 247, aspartate 249, and aspartate 251. Serine 106 carries the phosphoserine modification.

This sequence belongs to the phosphohexose mutase family. Requires Mg(2+) as cofactor. Post-translationally, activated by phosphorylation.

The catalysed reaction is alpha-D-glucosamine 1-phosphate = D-glucosamine 6-phosphate. Functionally, catalyzes the conversion of glucosamine-6-phosphate to glucosamine-1-phosphate. This Chlamydia muridarum (strain MoPn / Nigg) protein is Phosphoglucosamine mutase.